Reading from the N-terminus, the 198-residue chain is MAHYAKRVEIRAIIEELVLAKAQPTDDASESGYDRNMYLNTLFGYIALVGTSKKAIHYGEVDIVGPKASKKTGIDPRGKMVVSELVGRMRTLSVAVSEGPVKGATLRQMCEPFAQNAYDFLVVMAEMGTYSQLATKMTRSGFKEPQVMFDFASGLDLKALTLQEATVIQAMHSRLFRTEGAKGVFNAQSSIGEQAVEI.

It is found in the virion. This Vitis vinifera (Grape) protein is Capsid protein.